The chain runs to 420 residues: Cyclin-B2-1 (420 aa).

A disordered region spans residues methionine 1–proline 61. A compositionally biased stretch (basic and acidic residues) spans proline 49–lysine 60.

The protein belongs to the cyclin family. Cyclin AB subfamily. As to quaternary structure, interacts with CDKB2-1. In terms of tissue distribution, expressed in the root apices.

Functionally, involved in the control of the cell cycle at the G2/M (mitosis) transition. May activate CDKB2-1 kinase. This chain is Cyclin-B2-1 (CYCB2-1), found in Oryza sativa subsp. japonica (Rice).